A 148-amino-acid polypeptide reads, in one-letter code: Leghemoglobin 29 (148 aa).

The region spanning 2–148 is the Globin domain; the sequence is EFTLRQEALV…LAVAIMKEMS (147 aa). Tyr30 is subject to Nitrated tyrosine. Residue Ser45 coordinates heme b. Ser45 carries the post-translational modification Phosphoserine. His63 contacts O2. Residues His95 and Lys98 each contribute to the heme b site. At Tyr136 the chain carries Nitrated tyrosine.

This sequence belongs to the plant globin family. In terms of assembly, monomer. Post-translationally, nitrated in effective nodules and particularly in hypoxic conditions; this mechanism may play a protective role in the symbiosis by buffering toxic peroxynitrite NO(2)(-). Nitration level decrease during nodule senescence. Phosphorylation at Ser-45 disrupts the molecular environment of its porphyrin ring oxygen binding pocket, thus leading to a reduced oxygen consumption and to the delivery of oxygen O(2) to symbiosomes. Accumulates in root nodules after inoculation by bacteria of the genus Rhizobium. Expressed in mycorrhizal roots in the presence of the mycorrhizal fungus Glomus fasciculatum.

The protein resides in the cytoplasm. The protein localises to the cytosol. Its subcellular location is the nucleus. Leghemoglobin that reversibly binds oxygen O(2) through a pentacoordinated heme iron. In root nodules, facilitates the diffusion of oxygen to the bacteroids while preventing the bacterial nitrogenase from being inactivated by buffering dioxygen, nitric oxide and carbon monoxide, and promoting the formation of reactive oxygen species (ROS, e.g. H(2)O(2)). This role is essential for symbiotic nitrogen fixation (SNF). The sequence is that of Leghemoglobin 29 from Vicia faba (Broad bean).